The following is a 269-amino-acid chain: Cyclic AMP-dependent transcription factor ATF-1 (269 aa).

Residues 1–90 (MEDSHKSNTT…GEGENPSISA (90 aa)) are disordered. The segment covering 9–18 (TTETASQPGS) has biased composition (polar residues). The KID domain occupies 31-90 (QVSSLSESEESQDSSDSIGSSQKAHGILARRPSYRKILKDLSSEDTRGRKGEGENPSISA). S63 is subject to Phosphoserine; by CaMK1, CDK3, RPS6KA4 and RPS6KA5. Basic and acidic residues predominate over residues 67–83 (ILKDLSSEDTRGRKGEG). Position 196 is a phosphoserine; by HIPK2 (S196). A Glycyl lysine isopeptide (Lys-Gly) (interchain with G-Cter in SUMO2) cross-link involves residue K206. The bZIP domain maps to 211 to 269 (QLRREIRLMKNREAARECRRKKKEYVKCLENRVAVLENQNKTLIEELKTLKDLYSHKSV). The interval 213–237 (RREIRLMKNREAARECRRKKKEYVK) is basic motif. Residues 239–260 (LENRVAVLENQNKTLIEELKTL) form a leucine-zipper region.

The protein belongs to the bZIP family. ATF subfamily. Binds DNA as a dimer. Interacts with HIPK2 and CDK3. Interacts with MOTS-c, a peptide produced by the mitochondrially encoded 12S rRNA MT-RNR1; the interaction occurs in the nucleus following metabolic stress. Post-translationally, phosphorylated at Ser-196 by HIPK2 in response to genotoxic stress. This phosphorylation promotes transcription repression of FTH1 and other antioxidant detoxification genes. The CDK3-mediated phosphorylation at Ser-63 promotes its transactivation and transcriptional activities. Phosphorylated at Ser-63 by RPS6KA4 and RPS6KA5 in response to mitogenic or stress stimuli.

The protein resides in the nucleus. Binds the cAMP response element (CRE) (consensus: 5'-GTGACGT[AC][AG]-3'), a sequence present in many viral and cellular promoters. Binds to the Tax-responsive element (TRE) of HTLV-I. Mediates PKA-induced stimulation of CRE-reporter genes. Represses the expression of FTH1 and other antioxidant detoxification genes. Triggers cell proliferation and transformation. The polypeptide is Cyclic AMP-dependent transcription factor ATF-1 (Atf1) (Mus musculus (Mouse)).